The sequence spans 214 residues: Putative F-box protein At3g58910 (214 aa).

Residues Met-1–Leu-47 enclose the F-box domain.

This chain is Putative F-box protein At3g58910, found in Arabidopsis thaliana (Mouse-ear cress).